The primary structure comprises 696 residues: MDNRNTQMYTEGRIKVPGTQPSPGLRITIKRAGVEPTIPGVSQVMFPDASEVGSRKQLSSASGGPEKGPRYRDTFKEGPSELRTQEQRPPAKPGKKQSSWVPQEGSQELQAGQDQSELGLLPSWVPEGPEGLQQLGSGKEIEGQQRRQRNRGTGEDEPPESCQGPGYQSTLGHQADVVQPAEPCCPLAGRGQPLGDKRPKEADVPHIRPQEAPPEPSPGAHGDSSQEAMPPTSTVAPEEKTASSFLPSMPGPTKTKGGGEAVETQPAPGPLPPPEVRDIGERREPDRVQQQPQKPVVAAGTQNLRKFRQGFMKCLLEMEKVEASHRRALKARSLTAQKSPRTLTPVPTSSPSLPQTPASAPASGPSWARLSAPGPEPAPVGASVPTSTPCPVLLCPALDLGWRRMELSHHSSERTLSYAKARQEPEEQSLQKLYQNREKSEEQLTLKQEEAFRSYFEIFNGPGEVDAQSLKNILLLMGFSVTPAQVEDALMSADVNGDGHVDFKDFLAVMTDTRRFFCSVEQNALTDMAPHNPHTLLFEILPLLVEMLALPEAVLEEITNYYQKKLKAGTCKAQEMEAAIGRLRLQKQLPYNPQQEESSEVPERKVLSILSRLKQQNYAPNLQSPYAQVPCIPLCPRMDKKMVRRKPTNHYVQDQCTTPGLAPDIRSPFFQSRSQGNREHNSDSRKWPSSVPSRTH.

2 disordered regions span residues 1–301 (MDNR…AAGT) and 329–386 (LKAR…SVPT). The span at 67–86 (KGPRYRDTFKEGPSELRTQE) shows a compositional bias: basic and acidic residues. The span at 96-116 (KQSSWVPQEGSQELQAGQDQS) shows a compositional bias: polar residues. Residues 195-209 (GDKRPKEADVPHIRP) are compositionally biased toward basic and acidic residues. The span at 223–235 (DSSQEAMPPTSTV) shows a compositional bias: polar residues. The span at 275–287 (EVRDIGERREPDR) shows a compositional bias: basic and acidic residues. Composition is skewed to low complexity over residues 288 to 297 (VQQQPQKPVV) and 339 to 366 (SPRT…SGPS). A coiled-coil region spans residues 424–451 (EPEEQSLQKLYQNREKSEEQLTLKQEEA). The region spanning 481-516 (VTPAQVEDALMSADVNGDGHVDFKDFLAVMTDTRRF) is the EF-hand domain. Ca(2+) is bound by residues aspartate 494, asparagine 496, aspartate 498, histidine 500, and aspartate 505. Residues 646-696 (KPTNHYVQDQCTTPGLAPDIRSPFFQSRSQGNREHNSDSRKWPSSVPSRTH) are disordered. Over residues 676–686 (GNREHNSDSRK) the composition is skewed to basic and acidic residues.

In terms of biological role, involved in the differentiation of haploid spermatids. This chain is Spermatogenesis-associated protein 21 (SPATA21), found in Macaca fascicularis (Crab-eating macaque).